A 192-amino-acid chain; its full sequence is Large ribosomal subunit protein uL3 (192 aa).

The protein belongs to the universal ribosomal protein uL3 family. As to quaternary structure, part of the 50S ribosomal subunit. Forms a cluster with proteins L14 and L19.

In terms of biological role, one of the primary rRNA binding proteins, it binds directly near the 3'-end of the 23S rRNA, where it nucleates assembly of the 50S subunit. This is Large ribosomal subunit protein uL3 (rplC) from Helicobacter hepaticus (strain ATCC 51449 / 3B1).